The sequence spans 1829 residues: Protein TIC 214 (1829 aa).

A run of 6 helical transmembrane segments spans residues 18–38 (IINS…FSIG), 67–87 (FIAG…HLAL), 90–110 (PHTI…WNNP), 127–147 (LSIQ…HFLL), 174–194 (FVGW…VLVW), and 224–244 (IFSI…PSPI). A compositionally biased stretch (basic and acidic residues) spans 260-272 (RDVEIEKTFERGG). Residues 260 to 301 (RDVEIEKTFERGGTKQGQEVSAEEDPSPSLFSEEKEDPDKIE) form a disordered region.

It belongs to the TIC214 family. In terms of assembly, part of the Tic complex.

Its subcellular location is the plastid. The protein localises to the chloroplast inner membrane. Its function is as follows. Involved in protein precursor import into chloroplasts. May be part of an intermediate translocation complex acting as a protein-conducting channel at the inner envelope. This chain is Protein TIC 214, found in Citrus sinensis (Sweet orange).